The sequence spans 352 residues: rRNA 2'-O-methyltransferase fibrillarin (352 aa).

Positions 1–115 are disordered; it reads MGRPEFNRGG…GGAGGMRGGK (115 aa). Asymmetric dimethylarginine is present on residues R8, R16, R19, R23, R27, R35, R43, R51, R55, R58, R63, R67, R70, R75, R81, R85, R91, R95, R98, R102, R105, and R112. The span at 8–18 shows a compositional bias: gly residues; it reads RGGGGGGFRGG. Gly residues predominate over residues 26–59; that stretch reads SRGGFGGGGRGGYGGGDRGSFGGGDRGGFRGGRG. Over residues 66–113 the composition is skewed to gly residues; sequence FRGGRGGGDRGGFGGRGSPRGGFGGRGSPRGGRGSPRGGRGGAGGMRG. Residues 203–204, 222–223, 247–248, and 267–270 contribute to the S-adenosyl-L-methionine site; these read TT, EF, DA, and DVAQ.

This sequence belongs to the methyltransferase superfamily. Fibrillarin family. Component of box C/D small nucleolar ribonucleoprotein (snoRNP) particles. It is associated with the U3, U8 and U13 small nuclear RNAs. In terms of processing, by homology to other fibrillarins, some or all of the N-terminal domain arginines are modified to asymmetric dimethylarginine (DMA).

The protein localises to the nucleus. Its subcellular location is the nucleolus. It localises to the nucleoplasm. It catalyses the reaction L-glutaminyl-[histone H2A] + S-adenosyl-L-methionine = N(5)-methyl-L-glutaminyl-[histone H2A] + S-adenosyl-L-homocysteine + H(+). In terms of biological role, S-adenosyl-L-methionine-dependent methyltransferase that has the ability to methylate both RNAs and proteins. Involved in pre-rRNA processing. Utilizes the methyl donor S-adenosyl-L-methionine to catalyze the site-specific 2'-hydroxyl methylation of ribose moieties in pre-ribosomal RNA. Site specificity is provided by a guide RNA that base pairs with the substrate. Methylation occurs at a characteristic distance from the sequence involved in base pairing with the guide RNA. Also acts as a protein methyltransferase by mediating methylation of 'Gln-105' of histone H2A (H2AQ105me), a modification that impairs binding of the FACT complex and is specifically present at 35S ribosomal DNA locus. Plays a role in modulation of nucleolus size most likely through regulating the ribosomal RNA (rRNA) pool. This chain is rRNA 2'-O-methyltransferase fibrillarin, found in Caenorhabditis elegans.